A 253-amino-acid chain; its full sequence is Trans-aconitate 2-methyltransferase (253 aa).

This sequence belongs to the methyltransferase superfamily. Tam family.

It localises to the cytoplasm. The catalysed reaction is trans-aconitate + S-adenosyl-L-methionine = (E)-3-(methoxycarbonyl)pent-2-enedioate + S-adenosyl-L-homocysteine. Its function is as follows. Catalyzes the S-adenosylmethionine monomethyl esterification of trans-aconitate. In Azoarcus sp. (strain BH72), this protein is Trans-aconitate 2-methyltransferase.